Consider the following 152-residue polypeptide: ALNEADGSNKSAISKYIETTYGELPDETVLGSHLNKMKESGELAFKQNNYMKADPNAPPKRGRGRPPKPKVPLPPGTVVSPPRPRGRPPKDPNAPPKSPKAKATPATGRPRGRPKKVARSPAVPSPTAVSTGRPRGRPPKVKPQLTEVSVES.

In terms of domain architecture, H15 spans 1–54 (ALNEADGSNKSAISKYIETTYGELPDETVLGSHLNKMKESGELAFKQNNYMKAD). The disordered stretch occupies residues 40–152 (SGELAFKQNN…PQLTEVSVES (113 aa)). DNA-binding regions (a.T hook) lie at residues 60-68 (KRGRGRPPK), 82-90 (PRPRGRPPK), 108-116 (GRPRGRPKK), and 132-140 (GRPRGRPPK).

It belongs to the HMGA family.

The protein resides in the nucleus. In Glycine max (Soybean), this protein is HMG-Y-related protein B.